We begin with the raw amino-acid sequence, 141 residues long: Large ribosomal subunit protein uL11 (141 aa).

The protein belongs to the universal ribosomal protein uL11 family. As to quaternary structure, part of the ribosomal stalk of the 50S ribosomal subunit. Interacts with L10 and the large rRNA to form the base of the stalk. L10 forms an elongated spine to which L12 dimers bind in a sequential fashion forming a multimeric L10(L12)X complex. In terms of processing, one or more lysine residues are methylated.

Functionally, forms part of the ribosomal stalk which helps the ribosome interact with GTP-bound translation factors. The protein is Large ribosomal subunit protein uL11 of Gloeobacter violaceus (strain ATCC 29082 / PCC 7421).